Here is a 611-residue protein sequence, read N- to C-terminus: Polyphenol oxidase 4 (611 aa).

His-57, His-82, His-91, His-251, His-255, and His-283 together coordinate Cu cation. Positions 80–82 form a cross-link, 2'-(S-cysteinyl)-histidine (Cys-His); it reads CTH. His-255 contacts substrate. A propeptide spans 380 to 611 (removed in mature form); that stretch reads IKKSEGGKNP…GGLGALGRIF (232 aa).

This sequence belongs to the tyrosinase family. Heterotetramer. It depends on Cu(2+) as a cofactor. The C-ter is probably cleaved after Gly-379 since the mature active protein is smaller than the protein encoded by the gene.

The catalysed reaction is 2 L-dopa + O2 = 2 L-dopaquinone + 2 H2O. The enzyme catalyses L-tyrosine + O2 = L-dopaquinone + H2O. Copper-containing oxidase that catalyzes both the o-hydroxylation of monophenols and the subsequent oxidation of the resulting o-diphenols into reactive o-quinones, which evolve spontaneously to produce intermediates, which associate in dark brown pigments. Involved in the initial step of melanin synthesis. Melanins constitute a mechanism of defense and resistance to stress such as UV radiations, free radicals, gamma rays, dehydratation and extreme temperatures, and contribute to the fungal cell-wall resistance against hydrolytic enzymes in avoiding cellular lysis. Fungal pigments are also involved in the formation and stability of spores. In Agaricus bisporus (White button mushroom), this protein is Polyphenol oxidase 4 (PPO4).